An 85-amino-acid chain; its full sequence is Toxin BmKa1 (85 aa).

Residues 1–19 (MNYLVFFSLALLLMTGVGS) form the signal peptide. The region spanning 21–83 (RDGYIADDKN…VPIRVPGKCN (63 aa)) is the LCN-type CS-alpha/beta domain. Cystine bridges form between C31–C82, C35–C55, C41–C65, and C45–C67.

This sequence belongs to the long (4 C-C) scorpion toxin superfamily. Sodium channel inhibitor family. Alpha subfamily. Expressed by the venom gland.

It localises to the secreted. In terms of biological role, alpha toxins bind voltage-independently at site-3 of sodium channels (Nav) and inhibit the inactivation of the activated channels, thereby blocking neuronal transmission. The protein is Toxin BmKa1 of Olivierus martensii (Manchurian scorpion).